The following is a 469-amino-acid chain: Glutamate--tRNA ligase (469 aa).

Residues 11–21 carry the 'HIGH' region motif; the sequence is PSPTGFIHLGN. Residues 243-247 carry the 'KMSKS' region motif; that stretch reads KMSKR. An ATP-binding site is contributed by lysine 246.

This sequence belongs to the class-I aminoacyl-tRNA synthetase family. Glutamate--tRNA ligase type 1 subfamily. In terms of assembly, monomer.

Its subcellular location is the cytoplasm. It carries out the reaction tRNA(Glu) + L-glutamate + ATP = L-glutamyl-tRNA(Glu) + AMP + diphosphate. In terms of biological role, catalyzes the attachment of glutamate to tRNA(Glu) in a two-step reaction: glutamate is first activated by ATP to form Glu-AMP and then transferred to the acceptor end of tRNA(Glu). The polypeptide is Glutamate--tRNA ligase (Burkholderia cenocepacia (strain ATCC BAA-245 / DSM 16553 / LMG 16656 / NCTC 13227 / J2315 / CF5610) (Burkholderia cepacia (strain J2315))).